Consider the following 335-residue polypeptide: MVEKIWFENHPLKYLLWPLLWPLSVLFGAISRSKRQQFQTGRKQAYQAPVPVVVVGNITAGGNGKTPVVVWLVEQLQHLGYKPGVVSRGYGAKAPQYPLVLNDDTPTQHCGDEPKLIHRRTGAPVAVDPVRANAVKALVELDVDIIITDDGLQHYALERDVELVIVDGNRRFGNECLIPLGPLREGVERLQEVDFIITNGGLAHQGEISMSLAPSKAINLKTKQQVDVSELKALVAFAGIGHPPRFFNTLESMHADVKVTKGFADHQDFDQKELEALALQGANVIMTEKDAVKCSDYAQDNWWYLPVSAQLEPKDAERILNRIKEVKATYGSPSA.

59 to 66 (TAGGNGKT) contributes to the ATP binding site.

This sequence belongs to the LpxK family.

The enzyme catalyses a lipid A disaccharide + ATP = a lipid IVA + ADP + H(+). It participates in glycolipid biosynthesis; lipid IV(A) biosynthesis; lipid IV(A) from (3R)-3-hydroxytetradecanoyl-[acyl-carrier-protein] and UDP-N-acetyl-alpha-D-glucosamine: step 6/6. Transfers the gamma-phosphate of ATP to the 4'-position of a tetraacyldisaccharide 1-phosphate intermediate (termed DS-1-P) to form tetraacyldisaccharide 1,4'-bis-phosphate (lipid IVA). The sequence is that of Tetraacyldisaccharide 4'-kinase from Vibrio parahaemolyticus serotype O3:K6 (strain RIMD 2210633).